Consider the following 554-residue polypeptide: Phosphomethylpyrimidine synthase (554 aa).

Substrate is bound by residues N188, M217, Y246, H282, 302–304 (SRG), 343–346 (DGLR), and E382. H386 is a Zn(2+) binding site. Y409 provides a ligand contact to substrate. H450 contacts Zn(2+). The [4Fe-4S] cluster site is built by C530, C533, and C538.

It belongs to the ThiC family. As to quaternary structure, homodimer. The cofactor is [4Fe-4S] cluster.

It catalyses the reaction 5-amino-1-(5-phospho-beta-D-ribosyl)imidazole + S-adenosyl-L-methionine = 4-amino-2-methyl-5-(phosphooxymethyl)pyrimidine + CO + 5'-deoxyadenosine + formate + L-methionine + 3 H(+). It participates in cofactor biosynthesis; thiamine diphosphate biosynthesis. In terms of biological role, catalyzes the synthesis of the hydroxymethylpyrimidine phosphate (HMP-P) moiety of thiamine from aminoimidazole ribotide (AIR) in a radical S-adenosyl-L-methionine (SAM)-dependent reaction. This Coxiella burnetii (strain RSA 493 / Nine Mile phase I) protein is Phosphomethylpyrimidine synthase.